Here is a 75-residue protein sequence, read N- to C-terminus: Sec-independent protein translocase protein TatA (75 aa).

Residues 1–21 (MGSFSIWHWLIVLVIVVLVFG) traverse the membrane as a helical segment. 2 stretches are compositionally biased toward basic and acidic residues: residues 43 to 54 (MRDSEKSGEDVQ) and 66 to 75 (ATDKSHTVSH). The disordered stretch occupies residues 43–75 (MRDSEKSGEDVQQKIGGDTLDAQATDKSHTVSH).

Belongs to the TatA/E family. In terms of assembly, the Tat system comprises two distinct complexes: a TatABC complex, containing multiple copies of TatA, TatB and TatC subunits, and a separate TatA complex, containing only TatA subunits. Substrates initially bind to the TatABC complex, which probably triggers association of the separate TatA complex to form the active translocon.

It localises to the cell inner membrane. Part of the twin-arginine translocation (Tat) system that transports large folded proteins containing a characteristic twin-arginine motif in their signal peptide across membranes. TatA could form the protein-conducting channel of the Tat system. This chain is Sec-independent protein translocase protein TatA, found in Aromatoleum aromaticum (strain DSM 19018 / LMG 30748 / EbN1) (Azoarcus sp. (strain EbN1)).